Consider the following 158-residue polypeptide: GTP-dependent dephospho-CoA kinase (158 aa).

Positions 35, 36, 37, 54, 56, 109, and 132 each coordinate GTP.

The protein belongs to the GTP-dependent DPCK family.

It catalyses the reaction 3'-dephospho-CoA + GTP = GDP + CoA + H(+). Its pathway is cofactor biosynthesis; coenzyme A biosynthesis. In terms of biological role, catalyzes the GTP-dependent phosphorylation of the 3'-hydroxyl group of dephosphocoenzyme A to form coenzyme A (CoA). This is GTP-dependent dephospho-CoA kinase from Methanocaldococcus jannaschii (strain ATCC 43067 / DSM 2661 / JAL-1 / JCM 10045 / NBRC 100440) (Methanococcus jannaschii).